The following is a 152-amino-acid chain: CASP-like protein 5B1 (152 aa).

The Cytoplasmic segment spans residues 1–11 (MKKMIGSPGTM). Residues 12-32 (SGLILRLGQCATAAASIGVMV) traverse the membrane as a helical segment. Residues 33 to 42 (SSYDFSNYTA) lie on the Extracellular side of the membrane. An N-linked (GlcNAc...) asparagine glycan is attached at asparagine 39. The helical transmembrane segment at 43-63 (FCFLVASMGLQLIWSFGLACL) threads the bilayer. The Cytoplasmic segment spans residues 64-77 (DVYAIRRKSDLRSP). A helical membrane pass occupies residues 78-98 (ILLSLFTVGDWVTALLALAAA). The Extracellular segment spans residues 99–131 (CSSAGVTVLFTKDTEFCRQQPALSCDRFQISVG). A helical transmembrane segment spans residues 132-152 (LSFFNWFLAAISSHTMFWILI).

It belongs to the Casparian strip membrane proteins (CASP) family. Homodimer and heterodimers. As to expression, expressed in leaves, exclusively in hair cells (e.g. differentiated trichomes and immature cells).

It is found in the cell membrane. The polypeptide is CASP-like protein 5B1 (Arabidopsis thaliana (Mouse-ear cress)).